Here is a 471-residue protein sequence, read N- to C-terminus: Glutamate--tRNA ligase (471 aa).

The 'HIGH' region signature appears at 9-19; it reads PSPTGYLHVGG. Residues cysteine 98, cysteine 100, cysteine 125, and histidine 127 each coordinate Zn(2+). Residues 237-241 carry the 'KMSKS' region motif; it reads KLSKR. An ATP-binding site is contributed by lysine 240.

This sequence belongs to the class-I aminoacyl-tRNA synthetase family. Glutamate--tRNA ligase type 1 subfamily. Monomer. The cofactor is Zn(2+).

The protein resides in the cytoplasm. The enzyme catalyses tRNA(Glu) + L-glutamate + ATP = L-glutamyl-tRNA(Glu) + AMP + diphosphate. Its function is as follows. Catalyzes the attachment of glutamate to tRNA(Glu) in a two-step reaction: glutamate is first activated by ATP to form Glu-AMP and then transferred to the acceptor end of tRNA(Glu). This Shigella flexneri protein is Glutamate--tRNA ligase.